Reading from the N-terminus, the 212-residue chain is Thymidylate kinase (212 aa).

Residue 11–18 participates in ATP binding; sequence GPEGAGKT.

The protein belongs to the thymidylate kinase family.

The enzyme catalyses dTMP + ATP = dTDP + ADP. Its function is as follows. Phosphorylation of dTMP to form dTDP in both de novo and salvage pathways of dTTP synthesis. The polypeptide is Thymidylate kinase (Streptococcus pneumoniae serotype 2 (strain D39 / NCTC 7466)).